Consider the following 352-residue polypeptide: Probable cytosolic iron-sulfur protein assembly protein CIAO1 homolog (352 aa).

WD repeat units lie at residues 14-53, 63-102, 107-146, 152-191, 200-240, 268-306, and 319-352; these read GHDD…PSEQ, CHTR…WEQV, GHEN…EFEC, GHSQ…WGCA, GHES…TSTP, HHRR…LTQP, and AHGA…WWLR.

This sequence belongs to the WD repeat CIA1 family.

Essential component of the cytosolic iron-sulfur (Fe/S) protein assembly machinery. Required for the maturation of extramitochondrial Fe/S proteins. In Chlamydomonas reinhardtii (Chlamydomonas smithii), this protein is Probable cytosolic iron-sulfur protein assembly protein CIAO1 homolog.